Reading from the N-terminus, the 492-residue chain is MAKINQSVIAQILKAIGNANNVAQCGNCMTRLRLTLRDSTQVDKVALKQIPNVLGIIESDDQFQIVLGPGKAQAAAEIMNELLNSSTPTAQSKPSDTHLANIASANKKQLKEKQVSAVHKFLTKFATIFTPLIPGFIAVGLLLGFATLLEQITIQGVEHPNTILVEIIGYMKVFSKGMFSFLSILIGYNAQKAFGGSGINGAIIASLFVLSYNPDATSGFYSGISTFFGYSIDPRGNIIGVLIAAILGAWVERQVRKIIPDNLDMILTSAITLLIMGAIAFIFIMPLGSYLFSGMSWLFLHLNGNPFGTAILAGLFLLAVMFGVHQGFVPVYFALMEAQGFNSLFPILAMAGGGQVGAALALYVKAKKDSLLRTQIKGAIIPGLLGIGEPLIYGVTLPRIKPFITACLGGAAGGFFIGLIAYLGLPVGLNTVFGPSGLVALPLMTSNNGIFVGMAVYAAGLVVAYISGFVLTLIFGSKKIEVLKADVQSQKE.

Residues 1 to 89 (MAKINQSVIA…NELLNSSTPT (89 aa)) enclose the PTS EIIB type-1 domain. Residue C28 is the Phosphocysteine intermediate; for EIIB activity of the active site. The 365-residue stretch at 123–487 (TKFATIFTPL…KKIEVLKADV (365 aa)) folds into the PTS EIIC type-1 domain. A run of 10 helical transmembrane segments spans residues 125–145 (FATI…LLGF), 167–187 (IIGY…ILIG), 193–213 (AFGG…LSYN), 227–247 (FFGY…AAIL), 265–285 (MILT…IFIM), 311–331 (ILAG…FVPV), 344–364 (LFPI…ALYV), 378–398 (GAII…VTLP), 403–423 (FITA…IAYL), and 450–470 (IFVG…SGFV).

Its subcellular location is the cell inner membrane. The enzyme catalyses N-acetyl-beta-D-muramate(out) + N(pros)-phospho-L-histidyl-[protein] = N-acetyl-beta-D-muramate 6-phosphate(in) + L-histidyl-[protein]. In terms of biological role, the phosphoenolpyruvate-dependent sugar phosphotransferase system (sugar PTS), a major carbohydrate active transport system, catalyzes the phosphorylation of incoming sugar substrates concomitantly with their translocation across the cell membrane. This system is involved in N-acetylmuramic acid (MurNAc) transport, yielding cytoplasmic MurNAc-6-P. Is also able to take up anhydro-N-acetylmuramic acid (anhMurNAc), but cannot phosphorylate the carbon 6, probably because of the 1,6-anhydro ring. The polypeptide is PTS system N-acetylmuramic acid-specific EIIBC component (murP) (Photorhabdus laumondii subsp. laumondii (strain DSM 15139 / CIP 105565 / TT01) (Photorhabdus luminescens subsp. laumondii)).